Here is a 334-residue protein sequence, read N- to C-terminus: D-aspartate oxidase 1 (334 aa).

Residues Asp35, Arg36, Ser43, Gly307, and Thr312 each coordinate FAD. A Microbody targeting signal motif is present at residues 332-334 (SKL).

Belongs to the DAMOX/DASOX family. The cofactor is FAD. In terms of tissue distribution, expressed in the intestinal cells, hypodermis and in unidentified cells in the head in adult hermaphrodites.

The protein localises to the peroxisome matrix. The catalysed reaction is D-aspartate + O2 + H2O = oxaloacetate + H2O2 + NH4(+). It carries out the reaction D-glutamate + O2 + H2O = H2O2 + 2-oxoglutarate + NH4(+). Its activity is regulated as follows. Not inhibited by potassium bromide or thiolactomycin. Selectively catalyzes the oxidative deamination of acidic amino acids. May play a role in the egg-laying events and early development of the worm, in addition to quality control of the germ cells. The chain is D-aspartate oxidase 1 (ddo-1) from Caenorhabditis elegans.